Reading from the N-terminus, the 83-residue chain is FMRFamide-like neuropeptide 23 (83 aa).

Positions 1-24 are cleaved as a signal peptide; sequence MLLPKISILLYILVVLQETAAVRG. A propeptide spanning residues 25 to 36 is cleaved from the precursor; it reads ALFRSGRAVPFE. At Phe47 the chain carries Phenylalanine amide. Positions 50–83 are excised as a propeptide; it reads AGMASGVGGGSEGGPDDVKNSYIRVNGEPEIVYQ.

The protein belongs to the FARP (FMRFamide related peptide) family. As to expression, each flp gene is expressed in a distinct set of neurons.

The protein localises to the secreted. Its function is as follows. FMRFamides and FMRFamide-like peptides are neuropeptides. The protein is FMRFamide-like neuropeptide 23 (flp-23) of Caenorhabditis elegans.